The following is a 66-amino-acid chain: Myrmicitoxin(1)-Pr5a (66 aa).

Positions 1 to 25 are cleaved as a signal peptide; the sequence is MRSLYLSFSLTIIFVLVIMHAEAKA. A propeptide spanning residues 26–37 is cleaved from the precursor; sequence ISEPNAIAEADP. Valine 65 carries the valine amide modification.

This sequence belongs to the formicidae venom clade 3 family. As to expression, expressed by the venom gland.

Its subcellular location is the secreted. In terms of biological role, toxin that causes a rapid and irreversible paralysis when intrathoracically injected into insects (blowflies). Does not cause spontaneous nocifensive behaviors by intraplantar injection in mice. Exhibits hemolytic and cytotoxic activities on HEK293 cells. The chain is Myrmicitoxin(1)-Pr5a from Pogonomyrmex rugosus (Desert harvester ant).